The chain runs to 285 residues: HTH-type transcriptional regulator MurR (285 aa).

Residues 1–77 form the HTH rpiR-type domain; sequence MLYLTKISNA…MALIGEYSAS (77 aa). Residues 37 to 56 constitute a DNA-binding region (H-T-H motif); the sequence is SRQMAKQLGISQSSIVKFAQ. The region spanning 128 to 279 is the SIS domain; sequence IIEVISKAPF…SLKMIQRSSE (152 aa).

Homotetramer.

It participates in amino-sugar metabolism; N-acetylmuramate degradation [regulation]. Its function is as follows. Represses the expression of the murPQ operon involved in the uptake and degradation of N-acetylmuramic acid (MurNAc). Binds to two adjacent inverted repeats within the operator region. MurNAc 6-phosphate, the substrate of MurQ, is the specific inducer that weakens binding of MurR to the operator. In Shigella boydii serotype 18 (strain CDC 3083-94 / BS512), this protein is HTH-type transcriptional regulator MurR.